Here is a 429-residue protein sequence, read N- to C-terminus: Mannose-6-phosphate isomerase (429 aa).

The residue at position 2 (Ser2) is an N-acetylserine. Position 107 is a phosphoserine (Ser107). 4 residues coordinate Zn(2+): Gln109, His111, Glu136, and His281. Residue Arg300 is part of the active site.

It belongs to the mannose-6-phosphate isomerase type 1 family. In terms of assembly, monomer. It depends on Zn(2+) as a cofactor.

It localises to the cytoplasm. The catalysed reaction is D-mannose 6-phosphate = D-fructose 6-phosphate. The protein operates within nucleotide-sugar biosynthesis; GDP-alpha-D-mannose biosynthesis; alpha-D-mannose 1-phosphate from D-fructose 6-phosphate: step 1/2. Its activity is regulated as follows. Can be inhibited by an excess of zinc. In terms of biological role, involved in the synthesis of the GDP-mannose and dolichol-phosphate-mannose required for a number of critical mannosyl transfer reactions. The protein is Mannose-6-phosphate isomerase (PMI40) of Saccharomyces cerevisiae (strain ATCC 204508 / S288c) (Baker's yeast).